The following is a 430-amino-acid chain: Phosphomethylpyrimidine synthase (430 aa).

Residues Asn-67, Met-96, Tyr-125, His-161, 183 to 185, 224 to 227, and Glu-263 contribute to the substrate site; these read SRG and DALR. His-267 is a Zn(2+) binding site. A substrate-binding site is contributed by Tyr-290. Position 331 (His-331) interacts with Zn(2+). Positions 406, 409, and 413 each coordinate [4Fe-4S] cluster.

Belongs to the ThiC family. Homodimer. Requires [4Fe-4S] cluster as cofactor.

It catalyses the reaction 5-amino-1-(5-phospho-beta-D-ribosyl)imidazole + S-adenosyl-L-methionine = 4-amino-2-methyl-5-(phosphooxymethyl)pyrimidine + CO + 5'-deoxyadenosine + formate + L-methionine + 3 H(+). It participates in cofactor biosynthesis; thiamine diphosphate biosynthesis. Catalyzes the synthesis of the hydroxymethylpyrimidine phosphate (HMP-P) moiety of thiamine from aminoimidazole ribotide (AIR) in a radical S-adenosyl-L-methionine (SAM)-dependent reaction. The polypeptide is Phosphomethylpyrimidine synthase (Campylobacter jejuni subsp. jejuni serotype O:2 (strain ATCC 700819 / NCTC 11168)).